A 224-amino-acid polypeptide reads, in one-letter code: Prophage repressor CohE (224 aa).

The polypeptide is Prophage repressor CohE (cohE) (Escherichia coli (strain K12)).